Consider the following 188-residue polypeptide: Large ribosomal subunit protein uL22 (188 aa).

Residues 155–188 form a disordered region; the sequence is STPEGAKKGKKKKGTKDAVEKSSKRVKTAATAAH.

It belongs to the universal ribosomal protein uL22 family.

This Agriotes lineatus (Lined click beetle) protein is Large ribosomal subunit protein uL22 (RpL17).